The sequence spans 511 residues: 2'-5'-oligoadenylate synthase-like protein 1 (511 aa).

2 consecutive Ubiquitin-like domains span residues 350–429 (IQVT…ISPE) and 430–506 (IQVF…EGAA).

This sequence belongs to the 2-5A synthase family. In terms of assembly, specifically interacts with the ligand binding domain of the thyroid receptor (TR). TRIP14 does not require the presence of thyroid hormone for its interaction. Binds MBD1.

The protein resides in the nucleus. Its subcellular location is the nucleolus. The protein localises to the cytoplasm. Does not have 2'-5'-OAS activity, but can bind double-stranded RNA. Displays antiviral activity via an alternative antiviral pathway independent of RNase L. This chain is 2'-5'-oligoadenylate synthase-like protein 1 (Oasl1), found in Mus musculus (Mouse).